Here is a 186-residue protein sequence, read N- to C-terminus: Large ribosomal subunit protein eL18 (186 aa).

Belongs to the eukaryotic ribosomal protein eL18 family. In terms of assembly, component of the large ribosomal subunit. Mature ribosomes consist of a small (40S) and a large (60S) subunit. The 40S subunit contains about 32 different proteins and 1 molecule of RNA (18S). The 60S subunit contains 45 different proteins and 3 molecules of RNA (25S, 5.8S and 5S).

It is found in the cytoplasm. In terms of biological role, component of the ribosome, a large ribonucleoprotein complex responsible for the synthesis of proteins in the cell. The small ribosomal subunit (SSU) binds messenger RNAs (mRNAs) and translates the encoded message by selecting cognate aminoacyl-transfer RNA (tRNA) molecules. The large subunit (LSU) contains the ribosomal catalytic site termed the peptidyl transferase center (PTC), which catalyzes the formation of peptide bonds, thereby polymerizing the amino acids delivered by tRNAs into a polypeptide chain. The nascent polypeptides leave the ribosome through a tunnel in the LSU and interact with protein factors that function in enzymatic processing, targeting, and the membrane insertion of nascent chains at the exit of the ribosomal tunnel. The sequence is that of Large ribosomal subunit protein eL18 from Candida albicans (strain SC5314 / ATCC MYA-2876) (Yeast).